Consider the following 881-residue polypeptide: Interference hedgehog (881 aa).

An N-terminal signal peptide occupies residues 1–26 (MSSSSSSLLLMMLLLLLLLLTSKLEA). The Extracellular portion of the chain corresponds to 27 to 693 (IPVLSSTSPS…NHNETYSLNP (667 aa)). 4 Ig-like C2-type domains span residues 37 to 138 (PGVR…IARL), 128 to 228 (PLVV…IPSS), 242 to 330 (PYLL…YINV), and 336 to 425 (PVIV…LQVN). 3 disulfide bridges follow: Cys60/Cys122, Cys167/Cys212, and Cys266/Cys314. 9 N-linked (GlcNAc...) asparagine glycosylation sites follow: Asn75, Asn98, Asn194, Asn201, Asn282, Asn349, Asn381, Asn430, and Asn455. Cys358 and Cys407 are disulfide-bonded. Fibronectin type-III domains follow at residues 450-558 (PPSA…LQRG) and 566-661 (VPEL…TQRS). 3 residues coordinate heparin: Arg486, Lys492, and Lys494. N-linked (GlcNAc...) asparagine glycosylation is present at Asn517. A heparin-binding site is contributed by Arg532. Residue Asn548 is glycosylated (N-linked (GlcNAc...) asparagine). Residues 655–685 (QGRTQRSKLTTTEQPIQQKGGDRNVNTTPNH) are disordered. The span at 656–671 (GRTQRSKLTTTEQPIQ) shows a compositional bias: polar residues. An N-linked (GlcNAc...) asparagine glycan is attached at Asn686. A helical membrane pass occupies residues 694–714 (LLTGTIGGGALLLLLLIAFSF). Residues 715–881 (CLCRRKNRNG…SSGSLNSVGV (167 aa)) lie on the Cytoplasmic side of the membrane. Disordered stretches follow at residues 768-791 (NPLDQQQQQPLDEKNTNTNLNSPH) and 809-881 (PTTY…SVGV). Residues 837–855 (PGSNNNLQQIGSETTTTGQ) show a composition bias toward polar residues. Low complexity predominate over residues 865–881 (SSRSENLSSGSLNSVGV).

This sequence belongs to the immunoglobulin superfamily. IHOG family. In terms of assembly, homodimer. Heterotetramer; 2 iHog chains bind 2 hh chains when facilitated by heparin, heparin is required to promote high-affinity interactions between hh and iHog.

The protein localises to the membrane. Its function is as follows. Mediates response to the active Hedgehog (Hh) protein signal in embryos, functioning upstream or at the level of patched (ptc). The chain is Interference hedgehog from Drosophila willistoni (Fruit fly).